The chain runs to 311 residues: Haloalkane dehalogenase (311 aa).

In terms of domain architecture, AB hydrolase-1 spans 30 to 148 (AIVFQHGNPS…WDDFPDEVAQ (119 aa)). Asp-107 functions as the Nucleophile in the catalytic mechanism. Catalysis depends on Glu-131, which acts as the Proton donor. The active-site Proton acceptor is the His-272.

The protein belongs to the haloalkane dehalogenase family. Type 2 subfamily. As to quaternary structure, monomer.

It carries out the reaction 1-haloalkane + H2O = a halide anion + a primary alcohol + H(+). Catalyzes hydrolytic cleavage of carbon-halogen bonds in halogenated aliphatic compounds, leading to the formation of the corresponding primary alcohols, halide ions and protons. The polypeptide is Haloalkane dehalogenase (Mycolicibacterium smegmatis (strain ATCC 700084 / mc(2)155) (Mycobacterium smegmatis)).